The sequence spans 509 residues: Scavenger receptor class B member 1 (509 aa).

Over 1–11 (MGGSSRARWVA) the chain is Cytoplasmic. Residues 12-32 (LGLGALGLLFAALGVVMILMV) form a helical membrane-spanning segment. Residues 33-440 (PSLIKQQVLK…YTQLVLMPQV (408 aa)) are Extracellular-facing. N-linked (GlcNAc...) asparagine glycosylation is found at Asn102, Asn108, Asn116, Asn173, Asn212, Asn227, Asn255, Asn288, Asn310, Asn330, and Asn383. An intrachain disulfide couples Cys251 to Cys384. The helical transmembrane segment at 441-461 (LHYAQYVLLGLGGLLLLVPII) threads the bilayer. Residue Cys462 is the site of S-palmitoyl cysteine attachment. The Cytoplasmic segment spans residues 462–509 (CQLRSQEKCFLFWSGSKKGSQDKEAIQAYSESLMSPAAKGTVLQEAKL).

The protein belongs to the CD36 family. In terms of assembly, the C-terminal region binds to PDZK1. In terms of processing, N-glycosylated. Post-translationally, the six cysteines of the extracellular domain are all involved in intramolecular disulfide bonds. In terms of tissue distribution, expressed primarily in liver, ovary and adrenal gland, and, at lower levels in other non-placental steroidogenic tissues, including adipose tissue, mammary gland and testis (at protein level). Isoform 2 is expressed at lower levels than isoform 1 in liver, testis and adrenal gland. At the mRNA, but not at the protein level, isoform 2 is the predominant isoform in testis (80%).

The protein resides in the cell membrane. Its subcellular location is the membrane. It is found in the caveola. Receptor for different ligands such as phospholipids, cholesterol ester, lipoproteins, phosphatidylserine and apoptotic cells. Both isoform 1 and isoform 2 act as receptors for HDL, mediating selective uptake of cholesteryl ether and HDL-dependent cholesterol efflux. Also facilitates the flux of free and esterified cholesterol between the cell surface and apoB-containing lipoproteins and modified lipoproteins, although less efficiently than HDL. May be involved in the phagocytosis of apoptotic cells, via its phosphatidylserine binding activity. This chain is Scavenger receptor class B member 1 (Scarb1), found in Mus musculus (Mouse).